The chain runs to 231 residues: Octanoyltransferase (231 aa).

Positions 49–224 (ADTPDEIWLL…ALQRLLPPVY (176 aa)) constitute a BPL/LPL catalytic domain. Residues 88–95 (RGGQITYH), 155–157 (ALG), and 168–170 (GLA) each bind substrate. Cys186 serves as the catalytic Acyl-thioester intermediate.

Belongs to the LipB family.

It localises to the cytoplasm. It carries out the reaction octanoyl-[ACP] + L-lysyl-[protein] = N(6)-octanoyl-L-lysyl-[protein] + holo-[ACP] + H(+). Its pathway is protein modification; protein lipoylation via endogenous pathway; protein N(6)-(lipoyl)lysine from octanoyl-[acyl-carrier-protein]: step 1/2. Functionally, catalyzes the transfer of endogenously produced octanoic acid from octanoyl-acyl-carrier-protein onto the lipoyl domains of lipoate-dependent enzymes. Lipoyl-ACP can also act as a substrate although octanoyl-ACP is likely to be the physiological substrate. The protein is Octanoyltransferase of Aromatoleum aromaticum (strain DSM 19018 / LMG 30748 / EbN1) (Azoarcus sp. (strain EbN1)).